A 393-amino-acid chain; its full sequence is Bifunctional enzyme Fae/Hps (393 aa).

Residues 1-161 (MYQIGEALVG…YEKDRGAHAV (161 aa)) form a formaldehyde-activating enzyme region. Histidine 17 functions as the Proton donor in the catalytic mechanism. 5 residues coordinate substrate: aspartate 19, leucine 48, lysine 66, threonine 68, and glutamine 83. The 3-hexulose-6-phosphate synthase stretch occupies residues 162–393 (MGFKVQRLWD…IDQFRVMTDF (232 aa)).

It in the N-terminal section; belongs to the formaldehyde-activating enzyme family. The protein in the C-terminal section; belongs to the HPS/KGPDC family. HPS subfamily.

The catalysed reaction is 5,6,7,8-tetrahydromethanopterin + formaldehyde = 5,10-methylenetetrahydromethanopterin + H2O. It catalyses the reaction D-ribulose 5-phosphate + formaldehyde = D-arabino-hex-3-ulose 6-phosphate. The protein operates within carbohydrate biosynthesis; D-ribose 5-phosphate biosynthesis. Its function is as follows. Catalyzes the condensation of formaldehyde with tetrahydromethanopterin (H(4)MPT) to 5,10-methylenetetrahydromethanopterin. Functionally, catalyzes the reversible formation of ribulose-5-phosphate and formaldehyde from 3-hexulose-6-phosphate. This is Bifunctional enzyme Fae/Hps from Methanosphaerula palustris (strain ATCC BAA-1556 / DSM 19958 / E1-9c).